Consider the following 255-residue polypeptide: Probable pyridoxal 5'-phosphate synthase subunit PDX2 (255 aa).

Residue 46–48 (GES) participates in L-glutamine binding. Cys78 serves as the catalytic Nucleophile. Residues Arg108 and 142-143 (IR) contribute to the L-glutamine site. Active-site charge relay system residues include His202 and Glu204. The disordered stretch occupies residues 225-255 (GASSSSSKTIVSVGETSAGPEPAKPDLPIFQ).

Belongs to the glutaminase PdxT/SNO family. As to quaternary structure, interacts with PDX1.1 or PDX1.3, but not with PDX1.2. Binds to RPA2A. Strongly expressed in roots, stems, leaves and flowers.

Its subcellular location is the cytoplasm. The catalysed reaction is aldehydo-D-ribose 5-phosphate + D-glyceraldehyde 3-phosphate + L-glutamine = pyridoxal 5'-phosphate + L-glutamate + phosphate + 3 H2O + H(+). It carries out the reaction L-glutamine + H2O = L-glutamate + NH4(+). It functions in the pathway cofactor biosynthesis; pyridoxal 5'-phosphate biosynthesis. Functionally, catalyzes the hydrolysis of glutamine to glutamate and ammonia as part of the biosynthesis of pyridoxal 5'-phosphate. The resulting ammonia molecule is channeled to the active site of PDX1. Involved in the indirect resistance to singlet oxygen-generating photosensitizers. The sequence is that of Probable pyridoxal 5'-phosphate synthase subunit PDX2 (PDX2) from Arabidopsis thaliana (Mouse-ear cress).